We begin with the raw amino-acid sequence, 74 residues long: MDAVQELERRIVELEIQSALQEDVIAGLNAMVAELRQTLDLQQAQLRLLYQKMQDRNPDAQEPYSLRDEIPPHY.

This sequence belongs to the SlyX family.

This Neisseria meningitidis serogroup C (strain 053442) protein is Protein SlyX homolog.